We begin with the raw amino-acid sequence, 256 residues long: Zinc import ATP-binding protein ZnuC 1 (256 aa).

The ABC transporter domain maps to 5-220 (LTLQDVCVVF…PKYIALFGQQ (216 aa)). Residue 37 to 44 (GPNGAGKS) participates in ATP binding. Positions 232 to 256 (HHHNHDLSGEPSDGSCCSKNKKAHQ) are disordered.

It belongs to the ABC transporter superfamily. Zinc importer (TC 3.A.1.15.5) family. In terms of assembly, the complex is composed of two ATP-binding proteins (ZnuC), two transmembrane proteins (ZnuB) and a solute-binding protein (ZnuA).

Its subcellular location is the cell inner membrane. It catalyses the reaction Zn(2+)(out) + ATP(in) + H2O(in) = Zn(2+)(in) + ADP(in) + phosphate(in) + H(+)(in). Its function is as follows. Part of the ABC transporter complex ZnuABC involved in zinc import. Responsible for energy coupling to the transport system. This chain is Zinc import ATP-binding protein ZnuC 1, found in Aliivibrio fischeri (strain ATCC 700601 / ES114) (Vibrio fischeri).